The following is a 296-amino-acid chain: Phosphoribosylaminoimidazole-succinocarboxamide synthase (296 aa).

It belongs to the SAICAR synthetase family.

The enzyme catalyses 5-amino-1-(5-phospho-D-ribosyl)imidazole-4-carboxylate + L-aspartate + ATP = (2S)-2-[5-amino-1-(5-phospho-beta-D-ribosyl)imidazole-4-carboxamido]succinate + ADP + phosphate + 2 H(+). It participates in purine metabolism; IMP biosynthesis via de novo pathway; 5-amino-1-(5-phospho-D-ribosyl)imidazole-4-carboxamide from 5-amino-1-(5-phospho-D-ribosyl)imidazole-4-carboxylate: step 1/2. The polypeptide is Phosphoribosylaminoimidazole-succinocarboxamide synthase (Trichlorobacter lovleyi (strain ATCC BAA-1151 / DSM 17278 / SZ) (Geobacter lovleyi)).